We begin with the raw amino-acid sequence, 165 residues long: Chorismate pyruvate-lyase (165 aa).

M35, R77, L115, and E156 together coordinate substrate.

It belongs to the UbiC family. Monomer.

The protein localises to the cytoplasm. It catalyses the reaction chorismate = 4-hydroxybenzoate + pyruvate. Its pathway is cofactor biosynthesis; ubiquinone biosynthesis. In terms of biological role, removes the pyruvyl group from chorismate, with concomitant aromatization of the ring, to provide 4-hydroxybenzoate (4HB) for the ubiquinone pathway. This is Chorismate pyruvate-lyase from Escherichia coli O17:K52:H18 (strain UMN026 / ExPEC).